The primary structure comprises 388 residues: Pepsin A-3 (388 aa).

The N-terminal stretch at 1–15 is a signal peptide; sequence MKWLLLLGLVALSEC. A propeptide spans 16–62 (activation peptide); that stretch reads IMYKVPLIRKKSLRRTLSERGLLKDFLKKHNLNPARKYFPQWKAPTL. The region spanning 76 to 385 is the Peptidase A1 domain; sequence YFGTIGIGTP…DRANNQVGLA (310 aa). D94 is an active-site residue. Cystine bridges form between C107–C112 and C268–C272. Residue D277 is part of the active site. The cysteines at positions 311 and 344 are disulfide-linked.

It belongs to the peptidase A1 family.

It localises to the secreted. It carries out the reaction Preferential cleavage: hydrophobic, preferably aromatic, residues in P1 and P1' positions. Cleaves 1-Phe-|-Val-2, 4-Gln-|-His-5, 13-Glu-|-Ala-14, 14-Ala-|-Leu-15, 15-Leu-|-Tyr-16, 16-Tyr-|-Leu-17, 23-Gly-|-Phe-24, 24-Phe-|-Phe-25 and 25-Phe-|-Tyr-26 bonds in the B chain of insulin.. Its function is as follows. Shows particularly broad specificity; although bonds involving phenylalanine and leucine are preferred, many others are also cleaved to some extent. The protein is Pepsin A-3 (PGA3) of Homo sapiens (Human).